The sequence spans 80 residues: Exodeoxyribonuclease 7 small subunit (80 aa).

Belongs to the XseB family. Heterooligomer composed of large and small subunits.

The protein localises to the cytoplasm. The catalysed reaction is Exonucleolytic cleavage in either 5'- to 3'- or 3'- to 5'-direction to yield nucleoside 5'-phosphates.. In terms of biological role, bidirectionally degrades single-stranded DNA into large acid-insoluble oligonucleotides, which are then degraded further into small acid-soluble oligonucleotides. In Lactobacillus helveticus (strain DPC 4571), this protein is Exodeoxyribonuclease 7 small subunit.